The primary structure comprises 500 residues: L-arabinose isomerase (500 aa).

4 residues coordinate Mn(2+): glutamate 306, glutamate 333, histidine 350, and histidine 450.

Belongs to the arabinose isomerase family. As to quaternary structure, homohexamer. Mn(2+) serves as cofactor.

The catalysed reaction is beta-L-arabinopyranose = L-ribulose. It participates in carbohydrate degradation; L-arabinose degradation via L-ribulose; D-xylulose 5-phosphate from L-arabinose (bacterial route): step 1/3. Functionally, catalyzes the conversion of L-arabinose to L-ribulose. The chain is L-arabinose isomerase from Yersinia pestis bv. Antiqua (strain Nepal516).